Consider the following 441-residue polypeptide: Glutamyl-tRNA reductase (441 aa).

Substrate contacts are provided by residues 49–52, Ser-109, 114–116, and Gln-120; these read TCNR and EGQ. Cys-50 (nucleophile) is an active-site residue. 198–203 serves as a coordination point for NADP(+); that stretch reads GAGRMS.

Belongs to the glutamyl-tRNA reductase family. Homodimer.

It catalyses the reaction (S)-4-amino-5-oxopentanoate + tRNA(Glu) + NADP(+) = L-glutamyl-tRNA(Glu) + NADPH + H(+). Its pathway is porphyrin-containing compound metabolism; protoporphyrin-IX biosynthesis; 5-aminolevulinate from L-glutamyl-tRNA(Glu): step 1/2. The protein operates within porphyrin-containing compound metabolism; chlorophyll biosynthesis. In terms of biological role, catalyzes the NADPH-dependent reduction of glutamyl-tRNA(Glu) to glutamate 1-semialdehyde (GSA). This is Glutamyl-tRNA reductase from Prochlorococcus marinus (strain NATL1A).